The following is a 41-amino-acid chain: Perlinhibin (41 aa).

In terms of processing, contains four disulfide bonds.

Binds to calcite crystals in the shell and inhibits further shell growth at the binding site. In Haliotis laevigata (Smooth Australian abalone), this protein is Perlinhibin.